A 322-amino-acid chain; its full sequence is Transaldolase (322 aa).

Residue Lys-132 is the Schiff-base intermediate with substrate of the active site.

The protein belongs to the transaldolase family. Type 1 subfamily. In terms of assembly, homodimer.

It localises to the cytoplasm. The enzyme catalyses D-sedoheptulose 7-phosphate + D-glyceraldehyde 3-phosphate = D-erythrose 4-phosphate + beta-D-fructose 6-phosphate. It participates in carbohydrate degradation; pentose phosphate pathway; D-glyceraldehyde 3-phosphate and beta-D-fructose 6-phosphate from D-ribose 5-phosphate and D-xylulose 5-phosphate (non-oxidative stage): step 2/3. Its function is as follows. Transaldolase is important for the balance of metabolites in the pentose-phosphate pathway. In Protochlamydia amoebophila (strain UWE25), this protein is Transaldolase.